Reading from the N-terminus, the 125-residue chain is Small ribosomal subunit protein eS8 (125 aa).

The protein belongs to the eukaryotic ribosomal protein eS8 family. As to quaternary structure, part of the 30S ribosomal subunit.

This Methanosphaerula palustris (strain ATCC BAA-1556 / DSM 19958 / E1-9c) protein is Small ribosomal subunit protein eS8.